The sequence spans 121 residues: UPF0102 protein Syncc9902_1284 (121 aa).

This sequence belongs to the UPF0102 family.

The protein is UPF0102 protein Syncc9902_1284 of Synechococcus sp. (strain CC9902).